We begin with the raw amino-acid sequence, 600 residues long: Elongation factor 4 (600 aa).

In terms of domain architecture, tr-type G spans 5-187 (KYIRNFSIIA…AIVNKLHPPK (183 aa)). GTP contacts are provided by residues 17–22 (DHGKST) and 134–137 (NKID).

It belongs to the TRAFAC class translation factor GTPase superfamily. Classic translation factor GTPase family. LepA subfamily.

It localises to the cell inner membrane. The catalysed reaction is GTP + H2O = GDP + phosphate + H(+). Required for accurate and efficient protein synthesis under certain stress conditions. May act as a fidelity factor of the translation reaction, by catalyzing a one-codon backward translocation of tRNAs on improperly translocated ribosomes. Back-translocation proceeds from a post-translocation (POST) complex to a pre-translocation (PRE) complex, thus giving elongation factor G a second chance to translocate the tRNAs correctly. Binds to ribosomes in a GTP-dependent manner. This Rickettsia akari (strain Hartford) protein is Elongation factor 4.